The chain runs to 397 residues: Endoglucanase (397 aa).

Catalysis depends on Glu-194, which acts as the Proton donor. Glu-317 (nucleophile) is an active-site residue.

Belongs to the glycosyl hydrolase 5 (cellulase A) family.

It carries out the reaction Endohydrolysis of (1-&gt;4)-beta-D-glucosidic linkages in cellulose, lichenin and cereal beta-D-glucans.. The sequence is that of Endoglucanase from Paenibacillus polymyxa (Bacillus polymyxa).